Here is a 213-residue protein sequence, read N- to C-terminus: Transmembrane emp24 domain-containing protein p24delta8 (213 aa).

The first 22 residues, 1–22, serve as a signal peptide directing secretion; the sequence is MDLCRSSILLLIIALLSPRTLS. Topologically, residues 23-180 are lumenal; sequence MRYELKSSKT…QELNRSTNSK (158 aa). The GOLD domain maps to 32-148; it reads TKCIGEEIHE…VDMMEYQVKT (117 aa). N-linked (GlcNAc...) asparagine glycosylation occurs at Asn97. The stretch at 163 to 176 forms a coiled coil; the sequence is LREREEEMQELNRS. Arg166 is modified (omega-N-methylated arginine). An N-linked (GlcNAc...) asparagine glycan is attached at Asn174. A helical transmembrane segment spans residues 181–203; it reads MAWLSFGSLVVCLSVAGLQFWHL. Residues 202-213 are interaction with ARF1; that stretch reads HLKTFFEKKKLI. Residues 204-213 are Cytoplasmic-facing; sequence KTFFEKKKLI. The COPII vesicle coat-binding motif lies at 206–207; that stretch reads FF. The short motif at 206 to 213 is the COPI vesicle coat-binding element; it reads FFEKKKLI.

It belongs to the EMP24/GP25L family. Probably oligomerizes with other members of the EMP24/GP25L family. Associates with the COPI vesicle coat (coatomer). Associates with the COPII vesicle coat (coatomer). Interacts with ARF1 (GDP-bound).

Its subcellular location is the endoplasmic reticulum membrane. The protein localises to the golgi apparatus. It localises to the cis-Golgi network membrane. It is found in the golgi stack membrane. Functionally, involved in vesicular protein trafficking. Mainly functions in the early secretory pathway. Thought to act as cargo receptor at the lumenal side for incorporation of secretory cargo molecules into transport vesicles and to be involved in vesicle coat formation at the cytoplasmic side. On Golgi membranes, acts as a primary receptor for ARF1-GDP which is involved in COPI-vesicle formation. This chain is Transmembrane emp24 domain-containing protein p24delta8, found in Arabidopsis thaliana (Mouse-ear cress).